The following is a 202-amino-acid chain: Probable nicotinate-nucleotide adenylyltransferase (202 aa).

It belongs to the NadD family.

It catalyses the reaction nicotinate beta-D-ribonucleotide + ATP + H(+) = deamido-NAD(+) + diphosphate. It participates in cofactor biosynthesis; NAD(+) biosynthesis; deamido-NAD(+) from nicotinate D-ribonucleotide: step 1/1. Its function is as follows. Catalyzes the reversible adenylation of nicotinate mononucleotide (NaMN) to nicotinic acid adenine dinucleotide (NaAD). The chain is Probable nicotinate-nucleotide adenylyltransferase from Bacteroides thetaiotaomicron (strain ATCC 29148 / DSM 2079 / JCM 5827 / CCUG 10774 / NCTC 10582 / VPI-5482 / E50).